Here is a 239-residue protein sequence, read N- to C-terminus: Ribosomal RNA small subunit methyltransferase G (239 aa).

Residues Gly-77, Phe-82, 128-129 (AE), and Arg-146 each bind S-adenosyl-L-methionine. Residues 214–239 (IDKKRQTPKKYPRKPGTPNKTPLLEK) form a disordered region.

This sequence belongs to the methyltransferase superfamily. RNA methyltransferase RsmG family.

The protein localises to the cytoplasm. Functionally, specifically methylates the N7 position of guanine in position 535 of 16S rRNA. In Staphylococcus aureus (strain Mu3 / ATCC 700698), this protein is Ribosomal RNA small subunit methyltransferase G.